The sequence spans 353 residues: Photosystem II protein D1 (353 aa).

3 helical membrane-spanning segments follow: residues 29–46 (YVGW…TATI), 118–133 (HFLI…EWEL), and 142–156 (WICV…AATA). Residue His-118 coordinates chlorophyll a. Tyr-126 lines the pheophytin a pocket. Residues Asp-170 and Glu-189 each coordinate [CaMn4O5] cluster. Residues 197 to 218 (FHMLGVAGVFGGSLFSAMHGSL) form a helical membrane-spanning segment. His-198 contacts chlorophyll a. Residues His-215 and 264–265 (SF) contribute to the a quinone site. His-215 serves as a coordination point for Fe cation. His-272 lines the Fe cation pocket. The chain crosses the membrane as a helical span at residues 274 to 288 (FLAAWPVVGIWFTSL). Residues His-332, Glu-333, Asp-342, and Ala-344 each contribute to the [CaMn4O5] cluster site. Positions 345 to 353 (AVKAPSIIG) are excised as a propeptide.

It belongs to the reaction center PufL/M/PsbA/D family. In terms of assembly, PSII is composed of 1 copy each of membrane proteins PsbA, PsbB, PsbC, PsbD, PsbE, PsbF, PsbH, PsbI, PsbJ, PsbK, PsbL, PsbM, PsbT, PsbX, PsbY, PsbZ, Psb30/Ycf12, peripheral proteins PsbO, CyanoQ (PsbQ), PsbU, PsbV and a large number of cofactors. It forms dimeric complexes. The D1/D2 heterodimer binds P680, chlorophylls that are the primary electron donor of PSII, and subsequent electron acceptors. It shares a non-heme iron and each subunit binds pheophytin, quinone, additional chlorophylls, carotenoids and lipids. D1 provides most of the ligands for the Mn4-Ca-O5 cluster of the oxygen-evolving complex (OEC). There is also a Cl(-1) ion associated with D1 and D2, which is required for oxygen evolution. The PSII complex binds additional chlorophylls, carotenoids and specific lipids. serves as cofactor. Post-translationally, tyr-161 forms a radical intermediate that is referred to as redox-active TyrZ, YZ or Y-Z. C-terminally processed by CtpA; processing is essential to allow assembly of the oxygen-evolving complex and thus photosynthetic growth.

It localises to the cellular thylakoid membrane. The enzyme catalyses 2 a plastoquinone + 4 hnu + 2 H2O = 2 a plastoquinol + O2. In terms of biological role, photosystem II (PSII) is a light-driven water:plastoquinone oxidoreductase that uses light energy to abstract electrons from H(2)O, generating O(2) and a proton gradient subsequently used for ATP formation. It consists of a core antenna complex that captures photons, and an electron transfer chain that converts photonic excitation into a charge separation. The D1/D2 (PsbA/PsbD) reaction center heterodimer binds P680, the primary electron donor of PSII as well as several subsequent electron acceptors. The polypeptide is Photosystem II protein D1 (Prochlorothrix hollandica).